Reading from the N-terminus, the 157-residue chain is Snaclec A16 (157 aa).

The N-terminal stretch at 1-23 (MGRLISVSFGLLVVFLSLSGTGA) is a signal peptide. Cystine bridges form between C27/C38, C55/C149, and C124/C141. The region spanning 34 to 150 (YEGHCYKVFN…CELAYHFICM (117 aa)) is the C-type lectin domain.

The protein belongs to the snaclec family. In terms of assembly, heterodimer; disulfide-linked. Expressed by the venom gland.

It is found in the secreted. Interferes with one step of hemostasis (modulation of platelet aggregation, or coagulation cascade, for example). The polypeptide is Snaclec A16 (Macrovipera lebetinus (Levantine viper)).